The following is a 426-amino-acid chain: Serine hydroxymethyltransferase (426 aa).

Residues Leu-113 and 117 to 119 (GHL) contribute to the (6S)-5,6,7,8-tetrahydrofolate site. Lys-222 carries the N6-(pyridoxal phosphate)lysine modification. A (6S)-5,6,7,8-tetrahydrofolate-binding site is contributed by 363–365 (SPF).

This sequence belongs to the SHMT family. As to quaternary structure, homodimer. It depends on pyridoxal 5'-phosphate as a cofactor.

The protein resides in the cytoplasm. It carries out the reaction (6R)-5,10-methylene-5,6,7,8-tetrahydrofolate + glycine + H2O = (6S)-5,6,7,8-tetrahydrofolate + L-serine. It participates in one-carbon metabolism; tetrahydrofolate interconversion. The protein operates within amino-acid biosynthesis; glycine biosynthesis; glycine from L-serine: step 1/1. In terms of biological role, catalyzes the reversible interconversion of serine and glycine with tetrahydrofolate (THF) serving as the one-carbon carrier. This reaction serves as the major source of one-carbon groups required for the biosynthesis of purines, thymidylate, methionine, and other important biomolecules. Also exhibits THF-independent aldolase activity toward beta-hydroxyamino acids, producing glycine and aldehydes, via a retro-aldol mechanism. In Azobacteroides pseudotrichonymphae genomovar. CFP2, this protein is Serine hydroxymethyltransferase.